We begin with the raw amino-acid sequence, 388 residues long: Succinate--CoA ligase [ADP-forming] subunit beta (388 aa).

Residues 9–244 (KEILRKYGVT…LDEEDPAEIE (236 aa)) form the ATP-grasp domain. ATP-binding positions include lysine 46, 53-55 (GRG), glutamate 99, alanine 102, and glutamate 107. Mg(2+) is bound by residues asparagine 199 and aspartate 213. Substrate is bound by residues asparagine 264 and 321 to 323 (GIM).

This sequence belongs to the succinate/malate CoA ligase beta subunit family. As to quaternary structure, heterotetramer of two alpha and two beta subunits. Mg(2+) serves as cofactor.

The enzyme catalyses succinate + ATP + CoA = succinyl-CoA + ADP + phosphate. It carries out the reaction GTP + succinate + CoA = succinyl-CoA + GDP + phosphate. It participates in carbohydrate metabolism; tricarboxylic acid cycle; succinate from succinyl-CoA (ligase route): step 1/1. Succinyl-CoA synthetase functions in the citric acid cycle (TCA), coupling the hydrolysis of succinyl-CoA to the synthesis of either ATP or GTP and thus represents the only step of substrate-level phosphorylation in the TCA. The beta subunit provides nucleotide specificity of the enzyme and binds the substrate succinate, while the binding sites for coenzyme A and phosphate are found in the alpha subunit. The polypeptide is Succinate--CoA ligase [ADP-forming] subunit beta (Janthinobacterium sp. (strain Marseille) (Minibacterium massiliensis)).